The primary structure comprises 635 residues: 1-deoxy-D-xylulose-5-phosphate synthase (635 aa).

Thiamine diphosphate-binding positions include H79 and 120 to 122; that span reads GHS. A Mg(2+)-binding site is contributed by D151. Thiamine diphosphate-binding positions include 152–153, N182, Y291, and E372; that span reads GA. N182 is a Mg(2+) binding site.

It belongs to the transketolase family. DXPS subfamily. Homodimer. Requires Mg(2+) as cofactor. The cofactor is thiamine diphosphate.

The catalysed reaction is D-glyceraldehyde 3-phosphate + pyruvate + H(+) = 1-deoxy-D-xylulose 5-phosphate + CO2. It functions in the pathway metabolic intermediate biosynthesis; 1-deoxy-D-xylulose 5-phosphate biosynthesis; 1-deoxy-D-xylulose 5-phosphate from D-glyceraldehyde 3-phosphate and pyruvate: step 1/1. In terms of biological role, catalyzes the acyloin condensation reaction between C atoms 2 and 3 of pyruvate and glyceraldehyde 3-phosphate to yield 1-deoxy-D-xylulose-5-phosphate (DXP). The chain is 1-deoxy-D-xylulose-5-phosphate synthase from Xylella fastidiosa (strain M23).